A 440-amino-acid chain; its full sequence is Argininosuccinate lyase (440 aa).

Belongs to the lyase 1 family. Argininosuccinate lyase subfamily.

The protein resides in the cytoplasm. It carries out the reaction 2-(N(omega)-L-arginino)succinate = fumarate + L-arginine. Its pathway is amino-acid biosynthesis; L-arginine biosynthesis; L-arginine from L-ornithine and carbamoyl phosphate: step 3/3. The protein is Argininosuccinate lyase of Clostridium botulinum (strain Kyoto / Type A2).